Reading from the N-terminus, the 63-residue chain is Large ribosomal subunit protein bL32 (63 aa).

The segment at 1 to 23 (MATPKAKVSKSRRDKRRAQFTAR) is disordered. Basic residues predominate over residues 7–18 (KVSKSRRDKRRA).

Belongs to the bacterial ribosomal protein bL32 family.

The protein is Large ribosomal subunit protein bL32 of Chlorobium phaeobacteroides (strain BS1).